The following is a 64-amino-acid chain: Large ribosomal subunit protein uL29 (64 aa).

Belongs to the universal ribosomal protein uL29 family.

The sequence is that of Large ribosomal subunit protein uL29 from Solidesulfovibrio magneticus (strain ATCC 700980 / DSM 13731 / RS-1) (Desulfovibrio magneticus).